A 185-amino-acid polypeptide reads, in one-letter code: Ribosome-recycling factor (185 aa).

Belongs to the RRF family.

The protein resides in the cytoplasm. Its function is as follows. Responsible for the release of ribosomes from messenger RNA at the termination of protein biosynthesis. May increase the efficiency of translation by recycling ribosomes from one round of translation to another. The chain is Ribosome-recycling factor from Clostridium perfringens (strain ATCC 13124 / DSM 756 / JCM 1290 / NCIMB 6125 / NCTC 8237 / Type A).